A 218-amino-acid chain; its full sequence is Elongation factor Ts (218 aa).

Positions 82 to 85 (TDFV) are involved in Mg(2+) ion dislocation from EF-Tu.

Belongs to the EF-Ts family.

The protein resides in the cytoplasm. In terms of biological role, associates with the EF-Tu.GDP complex and induces the exchange of GDP to GTP. It remains bound to the aminoacyl-tRNA.EF-Tu.GTP complex up to the GTP hydrolysis stage on the ribosome. The polypeptide is Elongation factor Ts (Prochlorococcus marinus (strain MIT 9215)).